The primary structure comprises 146 residues: Ribonuclease H (146 aa).

The region spanning 1–143 (MKEIIIYTDG…CDQLARNAIK (143 aa)) is the RNase H type-1 domain. Mg(2+) is bound by residues aspartate 9, glutamate 47, aspartate 70, and aspartate 135.

It belongs to the RNase H family. Monomer. The cofactor is Mg(2+).

Its subcellular location is the cytoplasm. The catalysed reaction is Endonucleolytic cleavage to 5'-phosphomonoester.. Its function is as follows. Endonuclease that specifically degrades the RNA of RNA-DNA hybrids. The polypeptide is Ribonuclease H (Syntrophomonas wolfei subsp. wolfei (strain DSM 2245B / Goettingen)).